A 34-amino-acid polypeptide reads, in one-letter code: Sarcoplasmic/endoplasmic reticulum calcium ATPase regulator DWORF (34 aa).

A helical membrane pass occupies residues 12 to 32 (IVPILLLVGWIVGCIIVIYIV).

Homooligomer. Can also form heterooligomers with other sarcoplasmic/endoplasmic reticulum calcium ATPase (SERCA) regulators ARLN, ERLN, PLN and SLN. Monomer. Interacts with ATP2A1/SERCA1; the interaction results in activation of ATP2A1. Interacts as a monomer with ATP2A2/SERCA2; the interaction results in activation of ATP2A2. Highly expressed in heart (at protein level). Detected in heart and soleus, a postural muscle group of the hindlimb containing the highest enrichment of slow-twitch muscle fibers. Also expressed in diaphragm, which contains some slow-twitch fibers. Not detected in the quadriceps, a fast-twitch muscle group, or in cardiac atrial muscle. Not expressed in the prenatal heart but gradually increases in abundance postnatally.

Its subcellular location is the sarcoplasmic reticulum membrane. Its function is as follows. Enhances the activity of ATP2A1/SERCA1 ATPase in sarcoplasmic reticulum by displacing ATP2A1/SERCA1 inhibitors, thereby acting as a key regulator of skeletal muscle activity. Also enhances the activity of the ATP2A2/SERCA2 ATPase. Does not directly stimulate SERCA pump activity. Binds preferentially to the phosphorylated E1 and E2 conformational forms of ATP2A2 which predominate at high Ca(2+) concentrations during the systolic phase of the cardiac cycle. Competes with ATP2A2 inhibitor phospholamban (PLN) for binding to ATP2A2 and displaces PLN. Can activate ATP2A2 directly in the absence of PLN. Also enhances sarcoplasmic reticulum Ca(2+) uptake and myocyte contractility by displacing the SERCA inhibitory peptides sarcolipin (SLN) and myoregulin (MRLN). In Mus musculus (Mouse), this protein is Sarcoplasmic/endoplasmic reticulum calcium ATPase regulator DWORF.